A 354-amino-acid polypeptide reads, in one-letter code: UDP-N-acetylglucosamine--N-acetylmuramyl-(pentapeptide) pyrophosphoryl-undecaprenol N-acetylglucosamine transferase (354 aa).

Residues 15-17, asparagine 127, arginine 163, serine 191, isoleucine 244, 263-268, and glutamine 288 each bind UDP-N-acetyl-alpha-D-glucosamine; these read TGG and ALTVSE.

It belongs to the glycosyltransferase 28 family. MurG subfamily.

The protein localises to the cell inner membrane. It carries out the reaction di-trans,octa-cis-undecaprenyl diphospho-N-acetyl-alpha-D-muramoyl-L-alanyl-D-glutamyl-meso-2,6-diaminopimeloyl-D-alanyl-D-alanine + UDP-N-acetyl-alpha-D-glucosamine = di-trans,octa-cis-undecaprenyl diphospho-[N-acetyl-alpha-D-glucosaminyl-(1-&gt;4)]-N-acetyl-alpha-D-muramoyl-L-alanyl-D-glutamyl-meso-2,6-diaminopimeloyl-D-alanyl-D-alanine + UDP + H(+). It participates in cell wall biogenesis; peptidoglycan biosynthesis. Cell wall formation. Catalyzes the transfer of a GlcNAc subunit on undecaprenyl-pyrophosphoryl-MurNAc-pentapeptide (lipid intermediate I) to form undecaprenyl-pyrophosphoryl-MurNAc-(pentapeptide)GlcNAc (lipid intermediate II). The polypeptide is UDP-N-acetylglucosamine--N-acetylmuramyl-(pentapeptide) pyrophosphoryl-undecaprenol N-acetylglucosamine transferase (Vibrio cholerae serotype O1 (strain ATCC 39541 / Classical Ogawa 395 / O395)).